A 311-amino-acid chain; its full sequence is Formimidoylglutamase (311 aa).

The Mn(2+) site is built by His-130, Asp-155, His-157, Asp-159, Cys-242, and Asp-244.

It belongs to the arginase family. Mn(2+) is required as a cofactor.

It catalyses the reaction N-formimidoyl-L-glutamate + H2O = formamide + L-glutamate. Its pathway is amino-acid degradation; L-histidine degradation into L-glutamate; L-glutamate from N-formimidoyl-L-glutamate (hydrolase route): step 1/1. Its function is as follows. Catalyzes the conversion of N-formimidoyl-L-glutamate to L-glutamate and formamide. This Staphylococcus aureus (strain MRSA252) protein is Formimidoylglutamase.